A 222-amino-acid chain; its full sequence is Lipid transferase CIDEC (222 aa).

Residues 1–19 (MAMYTAVSTSVVTQQQLSE) show a composition bias toward polar residues. 2 disordered regions span residues 1–33 (MAMY…CRVT) and 203–222 (EQPP…KMLQ). The required for liquid-liquid phase separation (LLPS) stretch occupies residues 1–33 (MAMYTAVSTSVVTQQQLSEPSAEAPRARPCRVT). Residues 26-103 (RARPCRVTTA…VLHKGQKWQP (78 aa)) enclose the CIDE-N domain.

The protein belongs to the CIDE family. Homodimer. Homooligomer; undergoes liquid-liquid phase separation (LLPS) via its N-terminus, facilitating lipid droplet fusion, occurs at the lipid droplet contact sites. Interacts with CIDEA. Interacts with PLIN1. Interacts with NFAT5; this interaction is direct and retains NFAT5 in the cytoplasm. Interacts with CEBPB. Interacts with isoform CLSTN3beta of CLSTN3; inhibiting the lipid transferase activity of CIDEC. In terms of processing, ubiquitinated and targeted to proteasomal degradation, resulting in a short half-life (about 15 minutes in 3T3-L1 cells). Protein stability depends on triaclyglycerol synthesis, fatty acid availability and lipid droplet formation.

It is found in the lipid droplet. The protein localises to the endoplasmic reticulum. It localises to the nucleus. It catalyses the reaction a triacyl-sn-glycerol(in) = a triacyl-sn-glycerol(out). Its function is as follows. Lipid transferase specifically expressed in white adipose tissue, which promotes unilocular lipid droplet formation by mediating lipid droplet fusion. Lipid droplet fusion promotes their enlargement, restricting lipolysis and favoring lipid storage. Localizes on the lipid droplet surface, at focal contact sites between lipid droplets, and mediates atypical lipid droplet fusion by undergoing liquid-liquid phase separation (LLPS) and promoting directional net neutral lipid transfer from the smaller to larger lipid droplets. The transfer direction may be driven by the internal pressure difference between the contacting lipid droplet pair. Its role in neutral lipid transfer and lipid droplet enlargement is activated by the interaction with PLIN1. May also act as a CEBPB coactivator in the white adipose tissue to control the expression of a subset of CEBPB downstream target genes, including SOCS1, SOCS3, TGFB1, TGFBR1, ID2 and XDH. When overexpressed in preadipocytes, induces apoptosis or increases cell susceptibility to apoptosis induced by serum deprivation or TGFB treatment. This Bos taurus (Bovine) protein is Lipid transferase CIDEC.